A 120-amino-acid chain; its full sequence is Large ribosomal subunit protein uL18 (120 aa).

Belongs to the universal ribosomal protein uL18 family. In terms of assembly, part of the 50S ribosomal subunit; part of the 5S rRNA/L5/L18/L25 subcomplex. Contacts the 5S and 23S rRNAs.

Its function is as follows. This is one of the proteins that bind and probably mediate the attachment of the 5S RNA into the large ribosomal subunit, where it forms part of the central protuberance. This Chloroflexus aurantiacus (strain ATCC 29364 / DSM 637 / Y-400-fl) protein is Large ribosomal subunit protein uL18.